Here is a 194-residue protein sequence, read N- to C-terminus: MKESHFFAHLARMKLIQRWPLMRSVSPENVSEHSLQVAFVAHALALIKNKKFGGTLNPERIALLAMYHDSSEVLTGDLPTPVKYYNPEIAKEYKKIEAAAEHKLLSMLPEEFQEDFAPFLLSHSSHEEDSQIVKQADSICAYLKCLEELSAGNHEFALAKKRLDVTLQERKTPEMEYFLNTFAPSFELSLDEIS.

Substrate contacts are provided by residues 18–19 and His-33; that span reads RW. The region spanning 30–142 is the HD domain; the sequence is VSEHSLQVAF…VKQADSICAY (113 aa). 3 residues coordinate a divalent metal cation: His-33, His-68, and Asp-69. Substrate contacts are provided by residues Asp-69, 77–80, and Asp-137; that span reads DLPT. Residue Asp-137 coordinates a divalent metal cation.

The protein belongs to the 5DNU family. Homodimer. The cofactor is a divalent metal cation.

It localises to the cytoplasm. It catalyses the reaction a 2'-deoxyribonucleoside 5'-phosphate + H2O = a 2'-deoxyribonucleoside + phosphate. Functionally, catalyzes the strictly specific dephosphorylation of 2'-deoxyribonucleoside 5'-monophosphates. The chain is 5'-deoxynucleotidase VP0926 from Vibrio parahaemolyticus serotype O3:K6 (strain RIMD 2210633).